Consider the following 262-residue polypeptide: Polyamine aminopropyltransferase (262 aa).

Positions 1 to 249 constitute a PABS domain; sequence MWITQEITPY…DIHRAAFALP (249 aa). An S-methyl-5'-thioadenosine-binding site is contributed by Asn29. A spermidine-binding site is contributed by Asp83. The active-site Proton acceptor is the Asp155.

This sequence belongs to the spermidine/spermine synthase family. As to quaternary structure, homodimer or homotetramer.

Its subcellular location is the cytoplasm. The enzyme catalyses S-adenosyl 3-(methylsulfanyl)propylamine + putrescine = S-methyl-5'-thioadenosine + spermidine + H(+). Its pathway is amine and polyamine biosynthesis; spermidine biosynthesis; spermidine from putrescine: step 1/1. Its function is as follows. Catalyzes the irreversible transfer of a propylamine group from the amino donor S-adenosylmethioninamine (decarboxy-AdoMet) to putrescine (1,4-diaminobutane) to yield spermidine. This chain is Polyamine aminopropyltransferase, found in Helicobacter acinonychis (strain Sheeba).